The primary structure comprises 427 residues: Probable fatty acid methyltransferase Rv3720 (427 aa).

S-adenosyl-L-methionine-binding positions include 167–168 (YT), 202–210 (LLDVGCGWG), and 227–232 (TLSAEQ).

Belongs to the CFA/CMAS family.

Functionally, may be a S-adenosylmethionine-dependent methyltransferase involved in fatty acid metabolism. This is Probable fatty acid methyltransferase Rv3720 from Mycobacterium tuberculosis (strain ATCC 25618 / H37Rv).